The primary structure comprises 113 residues: Beta-microseminoprotein (113 aa).

Residues 1 to 20 (MEAWLGSLLFLATMVIASKA) form the signal peptide. Cystine bridges form between C22–C69, C38–C61, C56–C92, C59–C68, and C83–C106.

The protein belongs to the beta-microseminoprotein family. In terms of assembly, homodimer; Interacts with PI16.

The protein localises to the secreted. This is Beta-microseminoprotein (Msmb) from Mus musculus (Mouse).